A 767-amino-acid polypeptide reads, in one-letter code: MFAKLKKKIAEETAVAQRPGGATRIPRSVSKESVASMGADSGDDFASDGSSSREDLSSQLLRRNEQIRKLEARLSDYAEQVRNLQKIKEKLEIALEKHQDSSMRKFQEQNETFQANRAKMAEGLALALARKDQEWSEKMDQLEKEKNILTAQLQEMKNQSMNLFQRRDEMDELEGFQQQELSKIKHMLLKKEESLGKMEQELEARTRELSRTQEELMNSNQMSSDLSQKLEELQRHYSTLEEQRDHVIASKTGAESKITALEQKEQELQALIQQLSIDLQKVTAETQEKEDVITHLQEKVASLEKRLEQNLSGEEHLQELLKEKTLAEQNLEDTRQQLLAARSSQAKAINTLETRVRELEQTLQASEEQLQQSKGIVAAQETQIQELAAANQESSHVQQQALALEQQFLERTQALEAQIVALERTRAADQTTAEQGMRQLEQENAALKECRNEYERSLQNHQFELKKLKEEWSQREIVSVAMAQALEEVRKQREEFQQQAANLTAIIDEKEQNLREKTEVLLQKEQEILQLERGHNSALLQIHQLQAELEALRTLKAEEAAVVAEQEDLLRLRGPLQAEALSVNESHVTSRAMQDPVFQLPTAGRTPNGEVGAMDLTQLQKEKQDLEQQLLEKNKTIKQMQQRMLELRKTLQKELKIRPDNELFEVREKPGPEMANMAPSVTNNTDLTDAREINFEYLKHVVLKFMSCRESEAFHLIKAVSVLLNFSQEEENMLKETLEYKMSWFGSKPAPKGSIRPSISNPRIPWS.

A disordered region spans residues 13 to 58; it reads TAVAQRPGGATRIPRSVSKESVASMGADSGDDFASDGSSSREDLSS. Residues Ser-30, Ser-36, Ser-41, Ser-47, Ser-50, and Ser-51 each carry the phosphoserine modification. The stretch at 50-657 forms a coiled coil; that stretch reads SSSREDLSSQ…RKTLQKELKI (608 aa). The region spanning 688 to 737 is the GRIP domain; sequence TDAREINFEYLKHVVLKFMSCRESEAFHLIKAVSVLLNFSQEEENMLKET. The disordered stretch occupies residues 748 to 767; that stretch reads KPAPKGSIRPSISNPRIPWS.

As to quaternary structure, interacts with RAB6A. Directly interacts with TBC1D23. Interacts with FAM91A1; this interaction may be mediated by TBC1D23. Interacts with ARL1; this interaction recruits Golgin-97/GOLGA1 onto the Golgi apparatus. Post-translationally, MARylated by PARP12; MARylation is required for basolateral export of E-Cadherin.

It is found in the golgi apparatus membrane. The protein localises to the golgi apparatus. It localises to the trans-Golgi network membrane. The protein resides in the cytoplasmic vesicle. Its subcellular location is the secretory vesicle. It is found in the acrosome. Involved in vesicular trafficking at the Golgi apparatus level. Involved in endosome-to-Golgi trafficking. Mechanistically, captures transport vesicles arriving from endosomes via the protein TBC1D23. Recognized vesicles are then tethered to the trans-Golgi before subsequent SNARE engagement and vesicle fusion. Selectively regulates E-cadherin transport from the trans-Golgi network in tubulovesicular carriers. In terms of biological role, (Microbial infection) Plays an important role in poxvirus morphogenesis. Translocates into the viral factories where it may transport the membrane fragments and associated protein factors important for virus maturation to the sites of virion assembly. This Homo sapiens (Human) protein is Golgin subfamily A member 1 (GOLGA1).